The sequence spans 697 residues: Elongation factor G (697 aa).

The tr-type G domain maps to Thr-10–Leu-290. GTP contacts are provided by residues Ala-19–Thr-26, Asp-89–His-93, and Asn-143–Asp-146.

The protein belongs to the TRAFAC class translation factor GTPase superfamily. Classic translation factor GTPase family. EF-G/EF-2 subfamily.

It localises to the cytoplasm. Catalyzes the GTP-dependent ribosomal translocation step during translation elongation. During this step, the ribosome changes from the pre-translocational (PRE) to the post-translocational (POST) state as the newly formed A-site-bound peptidyl-tRNA and P-site-bound deacylated tRNA move to the P and E sites, respectively. Catalyzes the coordinated movement of the two tRNA molecules, the mRNA and conformational changes in the ribosome. In Deinococcus deserti (strain DSM 17065 / CIP 109153 / LMG 22923 / VCD115), this protein is Elongation factor G.